Consider the following 685-residue polypeptide: DNA-directed RNA polymerase subunit beta' (685 aa).

Zn(2+)-binding residues include cysteine 69, cysteine 71, cysteine 87, and cysteine 90. Positions 492, 494, and 496 each coordinate Mg(2+).

This sequence belongs to the RNA polymerase beta' chain family. RpoC1 subfamily. In plastids the minimal PEP RNA polymerase catalytic core is composed of four subunits: alpha, beta, beta', and beta''. When a (nuclear-encoded) sigma factor is associated with the core the holoenzyme is formed, which can initiate transcription. Mg(2+) serves as cofactor. Requires Zn(2+) as cofactor.

It localises to the plastid. It is found in the chloroplast. The enzyme catalyses RNA(n) + a ribonucleoside 5'-triphosphate = RNA(n+1) + diphosphate. In terms of biological role, DNA-dependent RNA polymerase catalyzes the transcription of DNA into RNA using the four ribonucleoside triphosphates as substrates. The protein is DNA-directed RNA polymerase subunit beta' of Dioscorea elephantipes (Elephant's foot yam).